Consider the following 113-residue polypeptide: uncharacterized protein (113 aa).

This is an uncharacterized protein from Escherichia coli O6:H1 (strain CFT073 / ATCC 700928 / UPEC).